A 600-amino-acid chain; its full sequence is Adenine deaminase 4 (600 aa).

It belongs to the metallo-dependent hydrolases superfamily. Adenine deaminase family. Requires Mn(2+) as cofactor.

It catalyses the reaction adenine + H2O + H(+) = hypoxanthine + NH4(+). This chain is Adenine deaminase 4, found in Rhizobium meliloti (strain 1021) (Ensifer meliloti).